We begin with the raw amino-acid sequence, 276 residues long: Undecaprenyl-diphosphatase (276 aa).

A run of 7 helical transmembrane segments spans residues Ala-46–Phe-66, Leu-94–Ile-114, Leu-122–Val-142, Leu-152–Val-172, Ser-196–Phe-216, Leu-226–Leu-246, and Val-253–Phe-273.

This sequence belongs to the UppP family.

Its subcellular location is the cell inner membrane. The enzyme catalyses di-trans,octa-cis-undecaprenyl diphosphate + H2O = di-trans,octa-cis-undecaprenyl phosphate + phosphate + H(+). Functionally, catalyzes the dephosphorylation of undecaprenyl diphosphate (UPP). Confers resistance to bacitracin. The polypeptide is Undecaprenyl-diphosphatase (Synechococcus sp. (strain JA-3-3Ab) (Cyanobacteria bacterium Yellowstone A-Prime)).